Here is a 478-residue protein sequence, read N- to C-terminus: NADH-ubiquinone oxidoreductase 49 kDa subunit, mitochondrial (478 aa).

The N-terminal 42 residues, 1 to 42 (MATTLFRLAGRNAKRHCMRQSTTIAHNLNSTRAFSASALRRY), are a transit peptide targeting the mitochondrion. Residues C341, C347, and C362 each contribute to the [4Fe-4S] cluster site.

It belongs to the complex I 49 kDa subunit family. In terms of assembly, complex I is composed of about 40 different subunits. Requires [4Fe-4S] cluster as cofactor.

It localises to the mitochondrion inner membrane. It catalyses the reaction a ubiquinone + NADH + 5 H(+)(in) = a ubiquinol + NAD(+) + 4 H(+)(out). Core subunit of the mitochondrial membrane respiratory chain NADH dehydrogenase (Complex I) that is believed to belong to the minimal assembly required for catalysis. Complex I functions in the transfer of electrons from NADH to the respiratory chain. The immediate electron acceptor for the enzyme is believed to be ubiquinone. The chain is NADH-ubiquinone oxidoreductase 49 kDa subunit, mitochondrial (nuo-49) from Neurospora crassa (strain ATCC 24698 / 74-OR23-1A / CBS 708.71 / DSM 1257 / FGSC 987).